The sequence spans 425 residues: Serine--tRNA ligase (425 aa).

An L-serine-binding site is contributed by 233 to 235 (TAE). ATP is bound at residue 264-266 (RRE). E287 contacts L-serine. 351–354 (EISS) contacts ATP. S385 provides a ligand contact to L-serine.

It belongs to the class-II aminoacyl-tRNA synthetase family. Type-1 seryl-tRNA synthetase subfamily. In terms of assembly, homodimer. The tRNA molecule binds across the dimer.

It localises to the cytoplasm. It catalyses the reaction tRNA(Ser) + L-serine + ATP = L-seryl-tRNA(Ser) + AMP + diphosphate + H(+). The enzyme catalyses tRNA(Sec) + L-serine + ATP = L-seryl-tRNA(Sec) + AMP + diphosphate + H(+). It participates in aminoacyl-tRNA biosynthesis; selenocysteinyl-tRNA(Sec) biosynthesis; L-seryl-tRNA(Sec) from L-serine and tRNA(Sec): step 1/1. Its function is as follows. Catalyzes the attachment of serine to tRNA(Ser). Is also able to aminoacylate tRNA(Sec) with serine, to form the misacylated tRNA L-seryl-tRNA(Sec), which will be further converted into selenocysteinyl-tRNA(Sec). In Parasynechococcus marenigrum (strain WH8102), this protein is Serine--tRNA ligase.